The primary structure comprises 1188 residues: Adenomatous polyposis coli protein-related protein 1 (1188 aa).

The disordered stretch occupies residues 1–50; it reads MSSSSSDENETTIHRTGSNTGGSGIYSQPRAGSSKRTSNVRHDVSDVDDE. The tract at residues 1-486 is required for interaction with bar-1 and hmp-2; sequence MSSSSSDENE…LSLRATRASP (486 aa). One copy of the ARM repeat lies at 314–358; sequence NCLKVLASLLSPDARFTSLVDSATGILKYVSQYLANTSTHLELRS. Residues 579–588 are compositionally biased toward low complexity; it reads IQQQQQMQKA. 6 disordered regions span residues 579–624, 670–702, 726–751, 778–952, 1003–1092, and 1157–1181; these read IQQQ…SMNP, TESE…DGAT, TPNG…GPSL, QSEM…TMRF, CSMI…LKDK, and YQKP…PNPK. The required for interaction with pry-1 stretch occupies residues 600–1188; the sequence is DLDIPTSTVM…NPKQMLVTIV (589 aa). 2 stretches are compositionally biased toward polar residues: residues 604–624 and 677–701; these read PTST…SMNP and LTSQ…SDGA. Polar residues-rich tracts occupy residues 778–788 and 800–811; these read QSEMPTSSSTP and FSPTQKTTSSPA. Composition is skewed to basic and acidic residues over residues 832–843 and 871–900; these read RRQDASDADRLL and EPER…DHNG. Composition is skewed to polar residues over residues 909–929, 937–946, 1014–1039, and 1164–1180; these read WSPQ…SSED, EPNSSTSGAA, QRNE…SASS, and GRNN…TPNP.

Belongs to the adenomatous polyposis coli (APC) family. As to quaternary structure, interacts (via N-terminus) with bar-1 and hmp-2; the interaction with hmp-2 is relatively weak. Interacts (via C-terminus) with pry-1 (via N-terminus). Probably associates with bar-1, gsk-3, pry-1 in a complex. During the L1 stage, expressed in vulval precursor cells (P3-8.p), seam cells and excretory cells.

Its subcellular location is the cell junction. It is found in the adherens junction. The protein localises to the cytoplasm. The protein resides in the nucleus. Functionally, has a role in endoderm cell specification and pharyngeal development. Required for the migration of epithelial cells, organization of the anterior seam cells and ceh-13 expression during embryo morphogenesis. Prevents hyperactivation of the Wnt signaling pathway during endoderm development, probably by preventing hmp-2 nuclear translocation. During larval development, apr-1 is required for expression of lin-39 in P3-8.p. Shown to negatively regulate Wnt signaling in vulval precursor cells. Has a role in cell division by establishing the polarity of the mother cell which forms the asymmetries of the daughter nuclei. During the L4 larval stage, it is required for the asymmetric division and self-renewal of seam cells. Thought to regulate export of wrm-1 from the nucleus possibly as part of a complex involving pry-1. In Caenorhabditis elegans, this protein is Adenomatous polyposis coli protein-related protein 1.